The chain runs to 65 residues: Large ribosomal subunit protein bL35 (65 aa).

Belongs to the bacterial ribosomal protein bL35 family.

The chain is Large ribosomal subunit protein bL35 from Thiobacillus denitrificans (strain ATCC 25259 / T1).